A 267-amino-acid polypeptide reads, in one-letter code: MRFLCLHGYAFSVEVLQQQMEPITAHLPSDWEYEFLEAGMEPTELMLPNLKQVPKPNYSWYNFPYPEDVEEAYERLAAYVESEGPFDGIWGFSQGGSMAALLLLMHQAEHPDTPYPFKMAIFTSAFLPHSFDNGVISWDLTEKNTLEPTYLPGRIDVSHGKKLDWKKDLHTSIEYDMINAVKDELDFPVDLLLRWRPSDIPEKIPVPSVHVRGLKDHYSFVDESVYELFDPEMARKMTHRGGHNFPRYNEELVHFAELIIETVVSLH.

Catalysis depends on charge relay system residues S93, D183, and H243.

The protein belongs to the AB hydrolase 3 family.

It participates in mycotoxin biosynthesis. Functionally, hydrolase; part of the gene cluster that mediates the biosynthesis of fusaric acid, a mycotoxin with low to moderate toxicity to animals and humans, but with high phytotoxic properties. L-aspartate is suggested as fusaric acid amino acid precursor that is activated and further processed to O-acetyl-L-homoserine by cluster enzymes aspartate kinase FUB3 and homoserine O-acetyltransferase FUB5, as well as enzymes of the primary metabolism. The polyketide synthase (PKS) FUB1 generates the triketide trans-2-hexenal which is presumptively released by the hydrolase FUB4 and linked to the NRPS-bound amino acid precursor by NAD(P)-dependent dehydrogenase FUB6. FUB1, FUB4, and the non-canonical NRPS Fub8 may form an enzyme complex. Further processing of the NRPS-bound intermediate might be carried out by FUB6 and the sulfhydrylase FUB7, enabling a spontaneous electrocyclization to close the carbon backbone of fusaric acid. Dihydrofusaric acid is likely to be released via reduction by the thioester reductase (TR) domain of FUB8 whereupon the final oxidation to fusaric acid may (also) be performed by the FMN-dependent dehydrogenase FUB9. The sequence is that of Hydrolase FUB4 from Fusarium oxysporum f. sp. lycopersici (strain 4287 / CBS 123668 / FGSC 9935 / NRRL 34936) (Fusarium vascular wilt of tomato).